The sequence spans 315 residues: Deoxyhypusine hydroxylase (315 aa).

HEAT-like PBS-type repeat units lie at residues 23-52, 56-82, 89-115, 179-205, 211-237, and 244-270; these read IAKRFRSLFTLRNLNGPLCIDAMASALNDK, LRHEIAYCLGQMEDEYALKVLIDLVKN, VRHEAAEALGAIGSESAHKTLKEYSND, NRYRALFSLRDIGDEQSVLALCDGLKD, LRHEVAFVLGQLQHRVAIDPLTTCVLD, and VRHEAAEALGAIASTETIPLLEKLLQD. Fe cation is bound by residues histidine 58, histidine 91, and glutamate 92. 3 residues coordinate Fe cation: histidine 213, histidine 246, and glutamate 247.

Belongs to the deoxyhypusine hydroxylase family. The cofactor is Fe(2+).

The enzyme catalyses [eIF5A protein]-deoxyhypusine + AH2 + O2 = [eIF5A protein]-hypusine + A + H2O. It functions in the pathway protein modification; eIF5A hypusination. In terms of biological role, catalyzes the hydroxylation of the N(6)-(4-aminobutyl)-L-lysine intermediate produced by deoxyhypusine synthase/DHPS on a critical lysine of the eukaryotic translation initiation factor 5A/eIF-5A. This is the second step of the post-translational modification of that lysine into an unusual amino acid residue named hypusine. Hypusination is unique to mature eIF-5A factor and is essential for its function. The polypeptide is Deoxyhypusine hydroxylase (dohh-1) (Dictyostelium discoideum (Social amoeba)).